The chain runs to 491 residues: Equilibrative nucleobase transporter 1 (491 aa).

A helical membrane pass occupies residues 17 to 37 (LLECLGFAGVLFGWPSLVFVF). N-linked (GlcNAc...) asparagine glycosylation occurs at Asn-56. The next 5 membrane-spanning stretches (helical) occupy residues 72 to 92 (LIFTLGSFMNNFMTFPTGYIF), 102 to 122 (LIAIFFYTTATLIIAFTSAGS), 123 to 143 (AVLLFLAMPMLTIGGILFLIT), 156 to 176 (STIITLYNGAFDSSSAVFLII), and 188 to 208 (ASFIFISVCSTWHVARTFLLM). N-linked (GlcNAc...) asparagine glycans are attached at residues Asn-220 and Asn-229. Ser-253 bears the Phosphoserine mark. Thr-258 is modified (phosphothreonine). The next 6 helical transmembrane spans lie at 279-299 (FAWHLVWLSVIQLWHYLFIGT), 319-339 (TNAFAFTQFGVLCAPWNGLLM), 356-376 (STLAVALCSTVPSLALTSLLC), 396-418 (ILQVISRSFLYGSNAAFLTLAFP), 427-447 (GLVMALSAVVSLLQFPIFTLI), and 456-476 (FYVNVMFMLAILLTFFHPFLV).

This sequence belongs to the SLC43A transporter (TC 2.A.1.44) family. As to expression, widely expressed with highest levels in the liver and lung, followed by the pancreas. Highly expressed in macrophages.

The protein resides in the basolateral cell membrane. The enzyme catalyses adenine(out) = adenine(in). It catalyses the reaction guanine(out) = guanine(in). The catalysed reaction is hypoxanthine(out) = hypoxanthine(in). Adenine transport is strongly inhibited by decynium-22. Its activity is regulated as follows. 6-mercaptopurine-transport is inhibited by 6-thioguanine, 6-methylmercaptopurine and decynium-22. In terms of biological role, sodium-independent purine-selective nucleobase transporter which mediates the equilibrative transport of extracellular purine nucleobases such as adenine, guanine and hypoxanthine. May regulate fatty acid (FA) transport in adipocytes, acting as a positive regulator of FA efflux and as a negative regulator of FA uptake. Its function is as follows. Sodium-independent purine-selective nucleobase transporter which mediates the equilibrative transport of extracellular purine nucleobase adenine. Mediates the influx and efflux of the purine nucleobase analog drug 6-mercaptopurine across the membrane. This Homo sapiens (Human) protein is Equilibrative nucleobase transporter 1 (SLC43A3).